The chain runs to 86 residues: Large ribosomal subunit protein eL43 (86 aa).

The C4-type zinc finger occupies cysteine 38–cysteine 60.

The protein belongs to the eukaryotic ribosomal protein eL43 family. Zn(2+) is required as a cofactor.

The sequence is that of Large ribosomal subunit protein eL43 from Desulfurococcus amylolyticus (strain DSM 18924 / JCM 16383 / VKM B-2413 / 1221n) (Desulfurococcus kamchatkensis).